We begin with the raw amino-acid sequence, 705 residues long: Cell cycle serine/threonine-protein kinase CDC5/MSD2 (705 aa).

Thr-23 carries the post-translational modification Phosphothreonine. Basic and acidic residues predominate over residues 41–53 (QTKRLDPNNDHHH). A disordered region spans residues 41–63 (QTKRLDPNNDHHHQPAQKKKREK). Residues 82 to 337 (YHRGHFLGEG…LTEIMDYVWF (256 aa)) form the Protein kinase domain. ATP contacts are provided by residues 88–96 (LGEGGFARC) and Lys-110. The active-site Proton acceptor is Asp-204. Ser-419 carries the post-translational modification Phosphoserine. Residues 513–595 (IVTKWVDYSN…VDFFAKYMKA (83 aa)) form the POLO box 1 domain. Residues Glu-553, His-569, His-609, and Asp-612 each contribute to the Zn(2+) site. The POLO box 2 domain maps to 614–700 (FLRRYTRYKP…IKEGLKQKST (87 aa)).

The protein belongs to the protein kinase superfamily. Ser/Thr protein kinase family. CDC5/Polo subfamily. Interacts with CDC48; the interaction is likely to result in CDC5 degradation. Interacts with CSA1.

It is found in the cytoplasm. Its subcellular location is the cytoskeleton. The protein resides in the microtubule organizing center. It localises to the spindle pole body. The catalysed reaction is L-seryl-[protein] + ATP = O-phospho-L-seryl-[protein] + ADP + H(+). The enzyme catalyses L-threonyl-[protein] + ATP = O-phospho-L-threonyl-[protein] + ADP + H(+). Protein kinase required for the cell cycle where it is involved in mitotic exit. A component of the fear (CDC14 early anaphase release) network which promotes CDC14 release from the nucleolus during early anaphase. Phosphorylates SCC1/MCD1 and NET1. The sequence is that of Cell cycle serine/threonine-protein kinase CDC5/MSD2 (CDC5) from Saccharomyces cerevisiae (strain ATCC 204508 / S288c) (Baker's yeast).